The following is a 330-amino-acid chain: Ketol-acid reductoisomerase (NADP(+)) (330 aa).

One can recognise a KARI N-terminal Rossmann domain in the interval 1–181; the sequence is MNVYYEQDAD…GGAKAGVIET (181 aa). Residues 24-27, Arg-47, Ser-50, Ser-52, and 82-85 contribute to the NADP(+) site; these read YGSQ and DQYQ. The active site involves His-107. Gly-133 is an NADP(+) binding site. The KARI C-terminal knotted domain maps to 182–327; sequence TIKDETETDL…AKLRNMMSWL (146 aa). Asp-190, Glu-194, Glu-226, and Glu-230 together coordinate Mg(2+). Ser-251 is a substrate binding site.

Belongs to the ketol-acid reductoisomerase family. Requires Mg(2+) as cofactor.

The enzyme catalyses (2R)-2,3-dihydroxy-3-methylbutanoate + NADP(+) = (2S)-2-acetolactate + NADPH + H(+). The catalysed reaction is (2R,3R)-2,3-dihydroxy-3-methylpentanoate + NADP(+) = (S)-2-ethyl-2-hydroxy-3-oxobutanoate + NADPH + H(+). Its pathway is amino-acid biosynthesis; L-isoleucine biosynthesis; L-isoleucine from 2-oxobutanoate: step 2/4. It functions in the pathway amino-acid biosynthesis; L-valine biosynthesis; L-valine from pyruvate: step 2/4. Functionally, involved in the biosynthesis of branched-chain amino acids (BCAA). Catalyzes an alkyl-migration followed by a ketol-acid reduction of (S)-2-acetolactate (S2AL) to yield (R)-2,3-dihydroxy-isovalerate. In the isomerase reaction, S2AL is rearranged via a Mg-dependent methyl migration to produce 3-hydroxy-3-methyl-2-ketobutyrate (HMKB). In the reductase reaction, this 2-ketoacid undergoes a metal-dependent reduction by NADPH to yield (R)-2,3-dihydroxy-isovalerate. This chain is Ketol-acid reductoisomerase (NADP(+)), found in Prosthecochloris aestuarii (strain DSM 271 / SK 413).